The chain runs to 372 residues: Riboflavin biosynthesis protein RibD (372 aa).

Positions 1-122 constitute a CMP/dCMP-type deaminase domain; that stretch reads MKDIFYMKKA…KWLKKHGILV (122 aa). Residues 1-145 form a deaminase region; the sequence is MKDIFYMKKA…KGFFQRMTTG (145 aa). His50 contacts Zn(2+). Residue Glu52 is the Proton donor of the active site. Positions 75 and 84 each coordinate Zn(2+). The segment at 146-372 is reductase; it reads IPWIKLKLAS…KLILTKHNSS (227 aa). Ala154 provides a ligand contact to NADP(+). Ser168 contacts substrate. Trp170 is an NADP(+) binding site. Arg184 lines the substrate pocket. Residues Thr196 and Asp200 each contribute to the NADP(+) site. The substrate site is built by Leu204 and Arg207. NADP(+) is bound at residue Ser236. Glu301 lines the substrate pocket. 303–309 provides a ligand contact to NADP(+); the sequence is GPSLSSS.

This sequence in the N-terminal section; belongs to the cytidine and deoxycytidylate deaminase family. It in the C-terminal section; belongs to the HTP reductase family. Zn(2+) serves as cofactor.

It catalyses the reaction 2,5-diamino-6-hydroxy-4-(5-phosphoribosylamino)-pyrimidine + H2O + H(+) = 5-amino-6-(5-phospho-D-ribosylamino)uracil + NH4(+). The catalysed reaction is 5-amino-6-(5-phospho-D-ribitylamino)uracil + NADP(+) = 5-amino-6-(5-phospho-D-ribosylamino)uracil + NADPH + H(+). It participates in cofactor biosynthesis; riboflavin biosynthesis; 5-amino-6-(D-ribitylamino)uracil from GTP: step 2/4. Its pathway is cofactor biosynthesis; riboflavin biosynthesis; 5-amino-6-(D-ribitylamino)uracil from GTP: step 3/4. In terms of biological role, converts 2,5-diamino-6-(ribosylamino)-4(3h)-pyrimidinone 5'-phosphate into 5-amino-6-(ribosylamino)-2,4(1h,3h)-pyrimidinedione 5'-phosphate. This chain is Riboflavin biosynthesis protein RibD (ribD), found in Buchnera aphidicola subsp. Baizongia pistaciae (strain Bp).